Consider the following 199-residue polypeptide: Ras-related protein Rab-7b (199 aa).

Residues 15–22 (GAIGVGKT), 34–40 (YEEYQTT), 63–67 (DTGGQ), 124–127 (NKID), and 154–155 (AK) each bind GTP. 2 short sequence motifs (switch) span residues 28-41 (YVHK…QTTL) and 67-82 (QERF…KGSD). Ser-186 is subject to Phosphoserine. 2 S-geranylgeranyl cysteine lipidation sites follow: Cys-198 and Cys-199.

It belongs to the small GTPase superfamily. Rab family. In terms of tissue distribution, expressed in heart, placenta, lung, skeletal muscle and peripheral blood leukocyte.

It localises to the late endosome. The protein resides in the lysosome. Its subcellular location is the golgi apparatus. The protein localises to the trans-Golgi network. It is found in the cytoplasmic vesicle. It localises to the phagosome. The protein resides in the phagosome membrane. In terms of biological role, controls vesicular trafficking from endosomes to the trans-Golgi network (TGN). Acts as a negative regulator of TLR9 signaling and can suppress TLR9-triggered TNFA, IL6, and IFNB production in macrophages by promoting TLR9 lysosomal degradation. Also negatively regulates TLR4 signaling in macrophages by promoting lysosomal degradation of TLR4. Promotes megakaryocytic differentiation by increasing NF-kappa-B-dependent IL6 production and subsequently enhancing the association of STAT3 with GATA1. Not involved in the regulation of the EGF- and EGFR degradation pathway. The sequence is that of Ras-related protein Rab-7b (RAB7B) from Homo sapiens (Human).